The sequence spans 118 residues: DNA polymerase epsilon subunit 4 (118 aa).

Composition is skewed to low complexity over residues 1–11 and 19–35; these read MAAAAAAGSGT and GGEA…SAPG. Residues 1–37 are disordered; the sequence is MAAAAAAGSGTPREEEAPGGEAAASQAQAPTSAPGGV. At Ala-2 the chain carries N-acetylalanine. At Thr-11 the chain carries Phosphothreonine. Ser-25 is subject to Phosphoserine.

Component of the DNA polymerase epsilon complex consisting of four subunits: the catalytic subunit POLE and the accessory subunits POLE2, POLE3 and POLE4. Interaction with POLE3 is a prerequisite for further binding with POLE and POLE2.

The protein localises to the nucleus. Its function is as follows. Accessory component of the DNA polymerase epsilon complex. Participates in DNA repair and in chromosomal DNA replication. This is DNA polymerase epsilon subunit 4 (Pole4) from Mus musculus (Mouse).